Reading from the N-terminus, the 351-residue chain is MTSPCSPPLKPPISPPKTPVPQASSIPSPPLPPSPLDFSALPSPPWSQQTPVPPPLPLPPPPAATGPAPRHVFGLEKSQLLKEAFDKAGPVPKGREDVKRLLKLHKDRFRGDLRWILFCADLPSLIQEGPQCGLVALWMAGTLLSPPSGVPLERLIRVATERGYTAQGEMFSVADMGRLAQEVLGCQAKLLSGGLGGPNRDLVLQHLVTGHPLLIPYDEDFNHEPCQRKGHKAHWAVSAGVLLGVRAVPSLGYTEDPELPGLFHPVLGTPCQPPSLPEEGSPGAVYLLSKQGKSWHYQLWDYDQVRESNLQLTDFSPSRATDGRVYVVPVGGVRAGLCGQALLLTPQDCSH.

Pro residues predominate over residues 1–19 (MTSPCSPPLKPPISPPKTP). The tract at residues 1–70 (MTSPCSPPLK…PPAATGPAPR (70 aa)) is disordered. Residues 36-50 (LDFSALPSPPWSQQT) are compositionally biased toward low complexity. Pro residues predominate over residues 51–64 (PVPPPLPLPPPPAA). Residues 124-244 (SLIQEGPQCG…WAVSAGVLLG (121 aa)) are peptidase C39-like. Residue cysteine 132 is part of the active site. Residue serine 316 is modified to Phosphoserine.

It belongs to the ACTMAP family. Interacts (via N-terminus) with PFN2 isoforms IIa and IIb; the interactions may facilitate efficient cleavage of the acetylated N-terminus of immature actin. Interacts with PFN1.

It localises to the cytoplasm. The enzyme catalyses N-terminal N(alpha)-acetyl-L-methionyl-L-aspartyl-[protein] + H2O = N-terminal L-aspartyl-[protein] + N-acetyl-L-methionine. The catalysed reaction is N-terminal N(alpha)-acetyl-L-methionyl-L-glutamyl-[protein] + H2O = N-terminal L-glutamyl-[protein] + N-acetyl-L-methionine. It carries out the reaction N-terminal N(alpha)-acetyl-L-cysteinyl-L-aspartyl-[protein] + H2O = N-terminal L-aspartyl-[protein] + N-acetyl-L-cysteine. It catalyses the reaction N-terminal N(alpha)-acetyl-L-cysteinyl-L-glutamyl-[protein] + H2O = N-terminal L-glutamyl-[protein] + N-acetyl-L-cysteine. Functionally, actin maturation protease that specifically mediates the cleavage of immature acetylated N-terminal actin, thereby contributing to actin maturation. Cleaves N-terminal acetylated methionine of immature cytoplasmic beta- and gamma-actins ACTB and ACTG1 after translation. Cleaves N-terminal acetylated cysteine of muscle alpha-actins ACTA1, ACTC1 and ACTA2 after canonical removal of N-terminal methionine. The chain is Actin maturation protease from Homo sapiens (Human).